A 454-amino-acid polypeptide reads, in one-letter code: Isthmin-1 (454 aa).

Residues 1 to 29 (MVRLAAELLLLLGLLLLTLHITVLRGSGA) form the signal peptide. 3 disordered regions span residues 29–93 (ASDR…PRSF), 125–144 (PDSE…WSLP), and 161–209 (TNSG…STDG). Polar residues predominate over residues 38 to 55 (GNNNLNLESDSTSETSFP). Residues 128–137 (EAEKDQHPEN) show a composition bias toward basic and acidic residues. The TSP type-1 domain occupies 208-252 (DGEGDWSLWSVCSVTCGNGNQKRTRSCGYACIATESRTCDRPNCP). 3 cysteine pairs are disulfide-bonded: C219-C246, C223-C251, and C234-C238. The 164-residue stretch at 279–442 (LFEVDMDSCE…QKCTESPSDE (164 aa)) folds into the AMOP domain.

It belongs to the isthmin family. As to quaternary structure, interacts with integrin ITGAV/ITGB5.

It is found in the secreted. In terms of biological role, acts as an angiogenesis inhibitor. The chain is Isthmin-1 (Ism1) from Mus musculus (Mouse).